The following is a 413-amino-acid chain: Serine/threonine transporter SstT (413 aa).

The next 9 helical transmembrane spans lie at glycine 14–serine 34, leucine 44–valine 64, isoleucine 82–phenylalanine 102, alanine 141–leucine 161, glycine 178–valine 198, leucine 217–phenylalanine 237, isoleucine 290–leucine 310, leucine 330–isoleucine 350, and leucine 356–valine 376.

It belongs to the dicarboxylate/amino acid:cation symporter (DAACS) (TC 2.A.23) family.

Its subcellular location is the cell inner membrane. The enzyme catalyses L-serine(in) + Na(+)(in) = L-serine(out) + Na(+)(out). It catalyses the reaction L-threonine(in) + Na(+)(in) = L-threonine(out) + Na(+)(out). Functionally, involved in the import of serine and threonine into the cell, with the concomitant import of sodium (symport system). The polypeptide is Serine/threonine transporter SstT (Edwardsiella ictaluri (strain 93-146)).